Reading from the N-terminus, the 365-residue chain is Probable 7-methylxanthine methyltransferase 3 (365 aa).

Y18 contributes to the S-adenosyl-L-homocysteine binding site. Residue T25 participates in theobromine binding. Residues C62, Q67, D99, L100, S132, and F133 each coordinate S-adenosyl-L-homocysteine. Residues Y150, H153, and W154 each coordinate theobromine. The Mg(2+) site is built by N170, F258, and N259. F311 contacts theobromine.

This sequence belongs to the methyltransferase superfamily. Type-7 methyltransferase family. Mg(2+) is required as a cofactor.

It catalyses the reaction 7-methylxanthine + S-adenosyl-L-methionine = theobromine + S-adenosyl-L-homocysteine + H(+). Its pathway is alkaloid biosynthesis. In terms of biological role, involved in the biosynthesis of theobromine. The protein is Probable 7-methylxanthine methyltransferase 3 of Theobroma cacao (Cacao).